Here is a 245-residue protein sequence, read N- to C-terminus: Large ribosomal subunit protein uL2 (245 aa).

Positions 198 to 245 (VSHPHGGGSHKRPGKPTTVARTAPPGQKVGHIAARKTGRAKRRAATKR) are disordered. Positions 230-245 (AARKTGRAKRRAATKR) are enriched in basic residues.

Belongs to the universal ribosomal protein uL2 family. In terms of assembly, part of the 50S ribosomal subunit. Forms a bridge to the 30S subunit in the 70S ribosome.

One of the primary rRNA binding proteins. Required for association of the 30S and 50S subunits to form the 70S ribosome, for tRNA binding and peptide bond formation. It has been suggested to have peptidyltransferase activity; this is somewhat controversial. Makes several contacts with the 16S rRNA in the 70S ribosome. This Korarchaeum cryptofilum (strain OPF8) protein is Large ribosomal subunit protein uL2.